The sequence spans 187 residues: dTTP/UTP pyrophosphatase (187 aa).

Residue D65 is the Proton acceptor of the active site.

This sequence belongs to the Maf family. YhdE subfamily. Requires a divalent metal cation as cofactor.

The protein resides in the cytoplasm. The enzyme catalyses dTTP + H2O = dTMP + diphosphate + H(+). It catalyses the reaction UTP + H2O = UMP + diphosphate + H(+). In terms of biological role, nucleoside triphosphate pyrophosphatase that hydrolyzes dTTP and UTP. May have a dual role in cell division arrest and in preventing the incorporation of modified nucleotides into cellular nucleic acids. This Deinococcus geothermalis (strain DSM 11300 / CIP 105573 / AG-3a) protein is dTTP/UTP pyrophosphatase.